The primary structure comprises 790 residues: Alpha,alpha-trehalose-phosphate synthase [UDP-forming] B (790 aa).

It in the N-terminal section; belongs to the glycosyltransferase 20 family. In the C-terminal section; belongs to the trehalose phosphatase family.

It carries out the reaction D-glucose 6-phosphate + UDP-alpha-D-glucose = alpha,alpha-trehalose 6-phosphate + UDP + H(+). In terms of biological role, synthesizes trehalose 6-phosphate, the precursor for the production of trehalose, the main carbohydrate storage reserve of the dormant spore. Trehalose accumulates in both prestalk and prespore cells and then is rapidly metabolized during terminal differentiation of stalk cells, while being stored in spores, where it serves as the principal energy and carbon source for germination. The sequence is that of Alpha,alpha-trehalose-phosphate synthase [UDP-forming] B (tpsB) from Dictyostelium discoideum (Social amoeba).